We begin with the raw amino-acid sequence, 377 residues long: Putative glutamate--cysteine ligase 2 (377 aa).

It belongs to the glutamate--cysteine ligase type 2 family. YbdK subfamily.

The catalysed reaction is L-cysteine + L-glutamate + ATP = gamma-L-glutamyl-L-cysteine + ADP + phosphate + H(+). Its function is as follows. ATP-dependent carboxylate-amine ligase which exhibits weak glutamate--cysteine ligase activity. The polypeptide is Putative glutamate--cysteine ligase 2 (Ralstonia pickettii (strain 12J)).